Reading from the N-terminus, the 262-residue chain is Indole-3-glycerol phosphate synthase (262 aa).

It belongs to the TrpC family.

The enzyme catalyses 1-(2-carboxyphenylamino)-1-deoxy-D-ribulose 5-phosphate + H(+) = (1S,2R)-1-C-(indol-3-yl)glycerol 3-phosphate + CO2 + H2O. It participates in amino-acid biosynthesis; L-tryptophan biosynthesis; L-tryptophan from chorismate: step 4/5. This chain is Indole-3-glycerol phosphate synthase, found in Leuconostoc mesenteroides subsp. mesenteroides (strain ATCC 8293 / DSM 20343 / BCRC 11652 / CCM 1803 / JCM 6124 / NCDO 523 / NBRC 100496 / NCIMB 8023 / NCTC 12954 / NRRL B-1118 / 37Y).